Here is an 878-residue protein sequence, read N- to C-terminus: MAAEHPEPPKGELQLPPPPPPGHYGAWAAQELQARLAEIGAPIQGSREELVERLQTYTRQTGIVLNRPVLRGEDGDKAAPPPMSAQLSGIPMPPPPMGLPPLQPPPPPPPPPPGLGLGFPMAHPPNLGPPPPLRVGEPVALSEEERLKLAQQQAALLMQQEERAKQAAVLMEQERQQEIAKMGTAVPRPPQDMGQLGVRTPLGPRVAAPVGPVVPTPTVLPMGAPVPRPRGPPPPPGDENREMDDPSVGPKIPQALEKILQLKESRQEEMNSQQEEEEMETDTRSSLGQSASETEEDTVSISKKEKNRKRRNRKKKKKPQRVRAASSESSGDREKDSGRSRGSDPPAADVEIEYVTEEPEIYEPNFIFFKRIFEAFKLTDDVKKEKEKEPEKLDKMESSAVPKKKGFEEEHKDSDDDSSDDEQEKKPEAPKLSKKKLRRMNRFTVAELKQLVARPDVVEMHDVTAQDPKLLVHLKATRNSVPVPRHWCFKRKYLQGKRGIEKPPFELPDFIKRTGIQEMREALQEKEEQKTMKSKMREKVRPKMGKIDIDYQKLHDAFFKWQTKPKLTIHGDLYYEGKEFETRLKEKKPGDLSDELRISLGMPVGPNAHKVPPPWLIAMQRYGPPPSYPNLKIPGLNSPIPESCSFGYHAGGWGKPPVDETGKPLYGDVFGTNAAEFQTKTEEEEIDRTPWGELEPSDEESSEEEEEEESDEDKPDETGFITPADSGLITPGGFSSVPAGMETPELIELRKKKIEEAMDGSETPQLFTVLPEKRTATVGGAMMGSTHIYDMSTVMSRKGPAPELQGVEVALAPEELELDPMAMTQKYEEHVREQQAQVEKEDFSDMVAEHAAKQKQKKRKAQPQDSRGGSKKYKEFKF.

A compositionally biased stretch (basic and acidic residues) spans 1–10 (MAAEHPEPPK). 2 disordered regions span residues 1–25 (MAAE…GHYG) and 67–136 (RPVL…LRVG). A Glycyl lysine isopeptide (Lys-Gly) (interchain with G-Cter in SUMO2) cross-link involves residue Lys-10. An SAP domain is found at 24 to 58 (YGAWAAQELQARLAEIGAPIQGSREELVERLQTYT). Composition is skewed to pro residues over residues 91-114 (PMPP…PPPG) and 122-133 (AHPPNLGPPPPL). Positions 140-177 (ALSEEERLKLAQQQAALLMQQEERAKQAAVLMEQERQQ) form a coiled coil. Disordered regions lie at residues 183 to 356 (GTAV…EYVT) and 383 to 436 (KKEK…SKKK). Residues 201–221 (PLGPRVAAPVGPVVPTPTVLP) are compositionally biased toward low complexity. Residues Arg-205, Arg-228, and Arg-230 each carry the omega-N-methylarginine modification. Residues 224–237 (APVPRPRGPPPPPG) show a composition bias toward pro residues. Residue Lys-258 is modified to N6-acetyllysine. Over residues 260–269 (LQLKESRQEE) the composition is skewed to basic and acidic residues. A Glycyl lysine isopeptide (Lys-Gly) (interchain with G-Cter in SUMO2) cross-link involves residue Lys-263. A Phosphoserine modification is found at Ser-272. The residue at position 281 (Thr-281) is a Phosphothreonine. Phosphoserine is present on residues Ser-290 and Ser-292. At Thr-294 the chain carries Phosphothreonine. Phosphoserine is present on Ser-300. The span at 305–321 (EKNRKRRNRKKKKKPQR) shows a compositional bias: basic residues. Positions 330–342 (SGDREKDSGRSRG) are enriched in basic and acidic residues. A Phosphoserine modification is found at Ser-343. Glycyl lysine isopeptide (Lys-Gly) (interchain with G-Cter in SUMO2) cross-links involve residues Lys-383 and Lys-395. Basic and acidic residues-rich tracts occupy residues 383–397 (KKEK…DKME) and 405–414 (KGFEEEHKDS). Positions 384-533 (KEKEKEPEKL…QEKEEQKTMK (150 aa)) are required for interaction with PRMT9. A phosphoserine mark is found at Ser-414, Ser-418, and Ser-419. Lys-475 is covalently cross-linked (Glycyl lysine isopeptide (Lys-Gly) (interchain with G-Cter in SUMO2)). Omega-N-methylarginine is present on residues Arg-491 and Arg-498. Arg-491 bears the Symmetric dimethylarginine mark. Residue Lys-526 forms a Glycyl lysine isopeptide (Lys-Gly) (interchain with G-Cter in SUMO2) linkage. The interval 674–740 (AAEFQTKTEE…PGGFSSVPAG (67 aa)) is disordered. The segment covering 695 to 715 (EPSDEESSEEEEEEESDEDKP) has biased composition (acidic residues). Lys-753 is covalently cross-linked (Glycyl lysine isopeptide (Lys-Gly) (interchain with G-Cter in SUMO2)). A Phosphothreonine modification is found at Thr-763. Glycyl lysine isopeptide (Lys-Gly) (interchain with G-Cter in SUMO2) cross-links involve residues Lys-773, Lys-826, and Lys-840. The span at 827 to 852 (YEEHVREQQAQVEKEDFSDMVAEHAA) shows a compositional bias: basic and acidic residues. The segment at 827-878 (YEEHVREQQAQVEKEDFSDMVAEHAAKQKQKKRKAQPQDSRGGSKKYKEFKF) is disordered. Ser-844 bears the Phosphoserine mark.

Component of the 17S U2 SnRNP complex, a ribonucleoprotein complex that contains small nuclear RNA (snRNA) U2 and a number of specific proteins. Part of the SF3B subcomplex of the 17S U2 SnRNP complex. SF3B associates with the splicing subcomplex SF3A and a 12S RNA unit to form the U2 small nuclear ribonucleoproteins complex (U2 snRNP). Within the SF3B complex, interacts directly with SF3B4. Found in a complex with PRMT9, SF3B2 and SF3B4. Interacts (Arg-491-methylated form) with SMN1 (via Tudor domain). Interacts with RBM7. Interacts with ERCC6. Component of the minor spliceosome. Within this complex, interacts with SCNM1 and CRIPT. In terms of processing, methylation at Arg-491 by PRMT9 is required for the interaction with SMN1.

Its subcellular location is the nucleus. It is found in the nucleus speckle. Its function is as follows. Component of the 17S U2 SnRNP complex of the spliceosome, a large ribonucleoprotein complex that removes introns from transcribed pre-mRNAs. The 17S U2 SnRNP complex (1) directly participates in early spliceosome assembly and (2) mediates recognition of the intron branch site during pre-mRNA splicing by promoting the selection of the pre-mRNA branch-site adenosine, the nucleophile for the first step of splicing. Within the 17S U2 SnRNP complex, SF3B2 is part of the SF3B subcomplex, which is required for 'A' complex assembly formed by the stable binding of U2 snRNP to the branchpoint sequence in pre-mRNA. Sequence independent binding of SF3A and SF3B subcomplexes upstream of the branch site is essential, it may anchor U2 snRNP to the pre-mRNA. May also be involved in the assembly of the 'E' complex. Also acts as a component of the minor spliceosome, which is involved in the splicing of U12-type introns in pre-mRNAs. This Mus musculus (Mouse) protein is Splicing factor 3B subunit 2.